A 581-amino-acid chain; its full sequence is Protein GAMETOPHYTE DEFECTIVE 1 (581 aa).

The segment covering 452–467 (SMNIESTSEGGSMSPS) has biased composition (polar residues). The interval 452–512 (SMNIESTSEG…TTGHASNDEM (61 aa)) is disordered. Basic and acidic residues predominate over residues 496–512 (ENSKERATTGHASNDEM).

This sequence belongs to the eukaryotic/archaeal RNase P protein component 3 family. Probable component of nuclear RNase P and RNase MRP ribonucleoproteins. Interacts with POP5. Mostly expressed in inflorescence and roots, to a lower extent in leaves, and, at low levels, in siliques, seedlings and stems.

It localises to the nucleus. The protein resides in the nucleolus. The protein localises to the mitochondrion. Functionally, probable component of ribonuclease P, a ribonucleoprotein complex that generates mature tRNA molecules by cleaving their 5'-ends. May also be a component of the MRP ribonuclease complex, which cleaves pre-rRNA sequences. Required for female gametophyte development and male competence. This chain is Protein GAMETOPHYTE DEFECTIVE 1, found in Arabidopsis thaliana (Mouse-ear cress).